The primary structure comprises 359 residues: MQTLADLLNTIPAIDPAAMSRAQRHIDGLLKPVGSLGRLEALAIQLAGMPGLNGIPHVGKKAVLVMCADHGVWEEGVAISPKEVTAIQAENMTRGTTGVCVLAAQAGANVHVVDVGIDTAEPIPGLINMRVARGSGNIASAPAMSRRQAEKLLLDVICYTRELAKNGVTLFGVGELGMANTTPAAAIVSTITGRDPEEVVGIGANLPTDKLANKIDVVRRAITLNQPNPQDGVDVLAKVGGFDLVGMAGVMLGAASCGLPVLLDGFLSYAAALAACQMSPAIKPYLTPSHLSAEKGARIALSHLGLEPYLDMEMRLGEGSGAALAMPIIEAACAIYNNMGELAASNIVLPGNTTSDLNS.

Glu318 (proton acceptor) is an active-site residue.

This sequence belongs to the CobT family. Homodimer.

It catalyses the reaction 5,6-dimethylbenzimidazole + nicotinate beta-D-ribonucleotide = alpha-ribazole 5'-phosphate + nicotinate + H(+). It functions in the pathway nucleoside biosynthesis; alpha-ribazole biosynthesis; alpha-ribazole from 5,6-dimethylbenzimidazole: step 1/2. Its function is as follows. Catalyzes the synthesis of alpha-ribazole-5'-phosphate from nicotinate mononucleotide (NAMN) and 5,6-dimethylbenzimidazole (DMB). In Escherichia coli (strain ATCC 8739 / DSM 1576 / NBRC 3972 / NCIMB 8545 / WDCM 00012 / Crooks), this protein is Nicotinate-nucleotide--dimethylbenzimidazole phosphoribosyltransferase.